Reading from the N-terminus, the 364-residue chain is Suberization-associated anionic peroxidase 1 (364 aa).

A signal peptide spans 1-25; it reads MGFRLSHLSLALSFVALALAGVAIY. N-linked (GlcNAc...) asparagine glycosylation occurs at N36. Intrachain disulfides connect C81–C160 and C112–C117. H110 acts as the Proton acceptor in catalysis. The Ca(2+) site is built by D111, V114, G116, and D118. Residues N127, N162, and N200 are each glycosylated (N-linked (GlcNAc...) asparagine). Intrachain disulfides connect C167/C353 and C246/C265. Residue P209 coordinates substrate. 2 N-linked (GlcNAc...) asparagine glycosylation sites follow: N214 and N226. Residue H239 participates in heme b binding. Position 240 (T240) interacts with Ca(2+). N264 is a glycosylation site (N-linked (GlcNAc...) asparagine). 3 residues coordinate Ca(2+): D278, T280, and D285.

This sequence belongs to the peroxidase family. Classical plant (class III) peroxidase subfamily. It depends on Ca(2+) as a cofactor. Requires heme b as cofactor.

The protein localises to the secreted. It catalyses the reaction 2 a phenolic donor + H2O2 = 2 a phenolic radical donor + 2 H2O. Removal of H(2)O(2), oxidation of toxic reductants, biosynthesis and degradation of lignin, suberization, auxin catabolism, response to environmental stresses such as wounding, pathogen attack and oxidative stress. These functions might be dependent on each isozyme/isoform in each plant tissue. Its function is as follows. Suggested to catalyze the deposition of the aromatic residues of suberin on the cell wall and thus play a role in cell-suberization. The chain is Suberization-associated anionic peroxidase 1 (TAP1) from Solanum lycopersicum (Tomato).